Consider the following 289-residue polypeptide: Acetyl-coenzyme A carboxylase carboxyl transferase subunit beta (289 aa).

Residues Val28–Ser289 form the CoA carboxyltransferase N-terminal domain. 4 residues coordinate Zn(2+): Cys32, Cys35, Cys51, and Cys54. The segment at Cys32 to Cys54 adopts a C4-type zinc-finger fold.

The protein belongs to the AccD/PCCB family. In terms of assembly, acetyl-CoA carboxylase is a heterohexamer composed of biotin carboxyl carrier protein (AccB), biotin carboxylase (AccC) and two subunits each of ACCase subunit alpha (AccA) and ACCase subunit beta (AccD). Requires Zn(2+) as cofactor.

It localises to the cytoplasm. It carries out the reaction N(6)-carboxybiotinyl-L-lysyl-[protein] + acetyl-CoA = N(6)-biotinyl-L-lysyl-[protein] + malonyl-CoA. It participates in lipid metabolism; malonyl-CoA biosynthesis; malonyl-CoA from acetyl-CoA: step 1/1. Component of the acetyl coenzyme A carboxylase (ACC) complex. Biotin carboxylase (BC) catalyzes the carboxylation of biotin on its carrier protein (BCCP) and then the CO(2) group is transferred by the transcarboxylase to acetyl-CoA to form malonyl-CoA. This is Acetyl-coenzyme A carboxylase carboxyl transferase subunit beta from Bacillus cereus (strain G9842).